The following is a 1173-amino-acid chain: WASH complex subunit 4 (1173 aa).

At Ala2 the chain carries N-acetylalanine. Ser7 is subject to Phosphoserine. Positions 27–56 form a coiled coil; sequence QLKNYGRFLEEYTSQLRRIEDALDDLIGDV. The interval 705 to 1173 is sufficient for interaction with WASHC5; sequence KDLALFFSLN…STVSADPVVK (469 aa). The span at 1141–1155 shows a compositional bias: basic and acidic residues; it reads AEENQEKKEKEEETK. Residues 1141–1173 form a disordered region; the sequence is AEENQEKKEKEEETKTSNGDGPESTVSADPVVK. Thr1154 bears the Phosphothreonine mark.

It belongs to the SWIP family. As to quaternary structure, component of the WASH core complex also described as WASH regulatory complex (SHRC) composed of WASH (WASHC1, WASH2P or WASH3P), WASHC2 (WASHC2A or WASHC2C), WASHC3, WASHC4 and WASHC5. The WASH core complex associates via WASHC2 with the F-actin-capping protein dimer (formed by CAPZA1, CAPZA2 or CAPZA3 and CAPZB) in a transient or substoichiometric manner which was initially described as WASH complex.

It localises to the early endosome. In terms of biological role, acts as a component of the WASH core complex that functions as a nucleation-promoting factor (NPF) at the surface of endosomes, where it recruits and activates the Arp2/3 complex to induce actin polymerization, playing a key role in the fission of tubules that serve as transport intermediates during endosome sorting. The sequence is that of WASH complex subunit 4 from Mus musculus (Mouse).